Consider the following 42-residue polypeptide: DRDSCVDKSRCAKYGYFQECTDCCKKYGHNGGTCMFFKCKCA.

Disulfide bonds link Cys-5/Cys-23, Cys-11/Cys-34, Cys-20/Cys-39, and Cys-24/Cys-41.

As to expression, expressed by the venom gland.

Its subcellular location is the secreted. Its function is as follows. Blocks human Kv11.1/KCNH2/ERG1 potassium channels (reversible, IC(50)=3.4 nM). At high toxin concentrations, block of Kv11.1/KCNH2/ERG1 macroscopic current is almost complete. Does not accelerate the kinetics of the closing process and has no effect on the activation and inactivation kinetics of the Kv11.1/KCNH2/ERG1 channels. This chain is Potassium channel toxin gamma-KTx 1.10, found in Centruroides margaritatus (Central American bark Scorpion).